Reading from the N-terminus, the 438-residue chain is Enolase (438 aa).

Residues histidine 159 and glutamate 168 each coordinate substrate. The Proton donor role is filled by glutamate 211. Residues aspartate 246, glutamate 297, and aspartate 322 each coordinate Mg(2+). The substrate site is built by glutamate 297 and aspartate 322. The active-site Proton acceptor is lysine 347. Substrate-binding positions include 374-377 and lysine 398; that span reads SHRS.

The protein belongs to the enolase family. In terms of assembly, homodimer. The cofactor is Mg(2+).

Its subcellular location is the cytoplasm. It carries out the reaction (2R)-2-phosphoglycerate = phosphoenolpyruvate + H2O. The protein operates within carbohydrate degradation; glycolysis; pyruvate from D-glyceraldehyde 3-phosphate: step 4/5. In Penicillium chrysogenum (Penicillium notatum), this protein is Enolase (enoA).